Consider the following 57-residue polypeptide: uncharacterized protein (57 aa).

The next 2 membrane-spanning stretches (helical) occupy residues 4 to 26 and 33 to 55; these read VNIL…SELW and ALGY…IAIL.

The protein resides in the cell membrane. This is an uncharacterized protein from Methanocaldococcus jannaschii (strain ATCC 43067 / DSM 2661 / JAL-1 / JCM 10045 / NBRC 100440) (Methanococcus jannaschii).